Reading from the N-terminus, the 1436-residue chain is DNA polymerase III PolC-type (1436 aa).

One can recognise an Exonuclease domain in the interval 420-576; that stretch reads YVVFDVETTG…YDTEATAYIF (157 aa).

This sequence belongs to the DNA polymerase type-C family. PolC subfamily.

The protein localises to the cytoplasm. It catalyses the reaction DNA(n) + a 2'-deoxyribonucleoside 5'-triphosphate = DNA(n+1) + diphosphate. Its function is as follows. Required for replicative DNA synthesis. This DNA polymerase also exhibits 3' to 5' exonuclease activity. The sequence is that of DNA polymerase III PolC-type from Staphylococcus aureus (strain MW2).